Here is a 277-residue protein sequence, read N- to C-terminus: MAVALILLLIAIGSVLFHLFSPWWWTPIATNWGYIDDTINITFWITGFVFTAVILFMAYCVFRFHHKEGRQAAYNPENKKLEWWLSVGTGVGVAAMLAPGLVVWHQFVTVPADATEVEIMGQQWQWSFRLPGKDGRLGTSDVRNISPENPMGLNRDDPHGQDDVVIENGDLHLPIGKPVKVLLRSVDVLHDFYVPEFRAKMDMVPGMVTYFWIRPIRTGTFDVLCAELCGAAHYQMRAKVIVEAESDYHAWLEQQKTFAGLSGRNAVVRAKYNSGDD.

Topologically, residues 1-40 are periplasmic; sequence MAVALILLLIAIGSVLFHLFSPWWWTPIATNWGYIDDTIN. A helical membrane pass occupies residues 41-61; the sequence is ITFWITGFVFTAVILFMAYCV. At 62 to 83 the chain is on the cytoplasmic side; sequence FRFHHKEGRQAAYNPENKKLEW. A helical transmembrane segment spans residues 84–104; the sequence is WLSVGTGVGVAAMLAPGLVVW. Residues 105 to 277 lie on the Periplasmic side of the membrane; that stretch reads HQFVTVPADA…VRAKYNSGDD (173 aa). Residues histidine 190, cysteine 225, cysteine 229, and histidine 233 each coordinate Cu cation.

It belongs to the cytochrome c oxidase subunit 2 family.

The protein localises to the cell membrane. The enzyme catalyses 4 Fe(II)-[cytochrome c] + O2 + 8 H(+)(in) = 4 Fe(III)-[cytochrome c] + 2 H2O + 4 H(+)(out). Functionally, cytochrome c oxidase is the component of the respiratory chain that catalyzes the reduction of oxygen to water. Subunits 1-3 form the functional core of the enzyme complex. Subunit 2 transfers the electrons from cytochrome c via its binuclear copper A center to the bimetallic center of the catalytic subunit 1. In Bradyrhizobium diazoefficiens (strain JCM 10833 / BCRC 13528 / IAM 13628 / NBRC 14792 / USDA 110), this protein is Alternative cytochrome c oxidase subunit 2 (coxM).